We begin with the raw amino-acid sequence, 333 residues long: Ornithine carbamoyltransferase (333 aa).

Carbamoyl phosphate-binding positions include 57–60 (STRT), Q83, R107, and 134–137 (HPTQ). Residues N168, D232, and 236 to 237 (SM) contribute to the L-ornithine site. Carbamoyl phosphate is bound by residues 274–275 (CL) and R319.

Belongs to the aspartate/ornithine carbamoyltransferase superfamily. OTCase family.

It localises to the cytoplasm. The enzyme catalyses carbamoyl phosphate + L-ornithine = L-citrulline + phosphate + H(+). It participates in amino-acid biosynthesis; L-arginine biosynthesis; L-arginine from L-ornithine and carbamoyl phosphate: step 1/3. Reversibly catalyzes the transfer of the carbamoyl group from carbamoyl phosphate (CP) to the N(epsilon) atom of ornithine (ORN) to produce L-citrulline. This is Ornithine carbamoyltransferase from Photobacterium profundum (strain SS9).